The chain runs to 342 residues: uncharacterized protein (342 aa).

The Zn(2+) site is built by Cys-41, His-63, Cys-94, Cys-97, Cys-100, Cys-108, and Glu-149.

Belongs to the zinc-containing alcohol dehydrogenase family. Requires Zn(2+) as cofactor.

This is an uncharacterized protein from Haemophilus influenzae (strain ATCC 51907 / DSM 11121 / KW20 / Rd).